We begin with the raw amino-acid sequence, 460 residues long: Mitochondrial distribution and morphology protein 34 (460 aa).

The 196-residue stretch at 1–196 folds into the SMP-LTD domain; it reads MSFKFDWESL…LPGIIHRLSQ (196 aa). Positions 304 to 321 are enriched in basic residues; the sequence is HNHQAPKRRTIKYKRKSK. 2 disordered regions span residues 304 to 356 and 368 to 460; these read HNHQ…PSRE and EPSS…AYSG. 2 stretches are compositionally biased toward low complexity: residues 330–355 and 393–405; these read STEVTTRETTPLPTSSTPLETSTPSR and SPPSLDLSIDTSL.

Belongs to the MDM34 family. As to quaternary structure, component of the ER-mitochondria encounter structure (ERMES) or MDM complex, composed of MMM1, MDM10, MDM12 and MDM34.

It localises to the mitochondrion outer membrane. Functionally, component of the ERMES/MDM complex, which serves as a molecular tether to connect the endoplasmic reticulum (ER) and mitochondria. Components of this complex are involved in the control of mitochondrial shape and protein biogenesis, and function in nonvesicular lipid trafficking between the ER and mitochondria. MDM34 is required for the interaction of the ER-resident membrane protein MMM1 and the outer mitochondrial membrane-resident beta-barrel protein MDM10. The protein is Mitochondrial distribution and morphology protein 34 of Yarrowia lipolytica (strain CLIB 122 / E 150) (Yeast).